The primary structure comprises 160 residues: Large ribosomal subunit protein eL21A (160 aa).

A Glycyl lysine isopeptide (Lys-Gly) (interchain with G-Cter in ubiquitin) cross-link involves residue Lys-32.

This sequence belongs to the eukaryotic ribosomal protein eL21 family. In terms of assembly, component of the large ribosomal subunit (LSU). Mature yeast ribosomes consist of a small (40S) and a large (60S) subunit. The 40S small subunit contains 1 molecule of ribosomal RNA (18S rRNA) and 33 different proteins (encoded by 57 genes). The large 60S subunit contains 3 rRNA molecules (25S, 5.8S and 5S rRNA) and 46 different proteins (encoded by 81 genes).

It localises to the cytoplasm. Its function is as follows. Component of the ribosome, a large ribonucleoprotein complex responsible for the synthesis of proteins in the cell. The small ribosomal subunit (SSU) binds messenger RNAs (mRNAs) and translates the encoded message by selecting cognate aminoacyl-transfer RNA (tRNA) molecules. The large subunit (LSU) contains the ribosomal catalytic site termed the peptidyl transferase center (PTC), which catalyzes the formation of peptide bonds, thereby polymerizing the amino acids delivered by tRNAs into a polypeptide chain. The nascent polypeptides leave the ribosome through a tunnel in the LSU and interact with protein factors that function in enzymatic processing, targeting, and the membrane insertion of nascent chains at the exit of the ribosomal tunnel. The sequence is that of Large ribosomal subunit protein eL21A from Saccharomyces cerevisiae (strain ATCC 204508 / S288c) (Baker's yeast).